The primary structure comprises 907 residues: CRM-domain containing factor CFM3B, chloroplastic (907 aa).

Residues 1–59 (MAINSSHHFCPMTTTTTTSAKFVDSLGSSFCKFHGTSSSISLRSYRFGFSFMKNVKRLS) constitute a chloroplast transit peptide. Disordered stretches follow at residues 62-89 (GSSS…SKVV) and 101-123 (LGVI…GSSS). The span at 70 to 84 (RNENWNRTQKQNQFR) shows a compositional bias: polar residues. CRM domains follow at residues 220–316 (MTLS…DGSG) and 421–518 (STLG…EVGE). Residues 621-654 (SAKLVRKLERKLAFAEKKLLKAERALAKVEESLK) are a coiled coil. Positions 663–763 (EGITEEERFM…KDYKRPTTLR (101 aa)) constitute a CRM 3 domain. Residues 824–907 (MAYSSDEETE…LQNEELDVQP (84 aa)) form a disordered region. Acidic residues-rich tracts occupy residues 828–857 (SDEE…DEEG) and 868–881 (TDVE…DTDF). Over residues 882-897 (GDNSASSTTPETTFVE) the composition is skewed to polar residues.

Interacts with RNA. Part of large ribonucleo-protein particles that contain CAF1 and/or CAF2, and RNC1. Interacts with RFC3 in plastids. Expressed at low levels in roots and shoots.

The protein resides in the plastid. The protein localises to the chloroplast. Its function is as follows. Binds specific group II introns in chloroplasts and facilitates their splicing. Exhibits non-specific action during plastid rRNA biogenesis; RFC3 prevents unaccurate splicing to improve the accuracy of plastid rRNA processing. Acts on subgroup IIB introns. The substrates of the subgroup IIB also require the CRM domain proteins CAF1 or CAF2, with a simultaneous binding of CFM3B and CAF1 or CAF2. Required for seed development. The chain is CRM-domain containing factor CFM3B, chloroplastic from Arabidopsis thaliana (Mouse-ear cress).